Reading from the N-terminus, the 393-residue chain is Digeranylgeranylglycerophospholipid reductase 2 (393 aa).

Residues aspartate 33, cysteine 44, alanine 45, glycine 47, arginine 100, alanine 124, aspartate 280, glycine 292, and isoleucine 293 each contribute to the FAD site.

It belongs to the geranylgeranyl reductase family. DGGGPL reductase subfamily. It depends on FAD as a cofactor.

The catalysed reaction is a 2,3-bis-O-phytanyl-sn-glycerol 1-phospholipid + 8 A = a 2,3-bis-O-(geranylgeranyl)-sn-glycerol 1-phospholipid + 8 AH2. It catalyses the reaction 2,3-bis-O-(phytanyl)-sn-glycerol 1-phosphate + 8 A = 2,3-bis-O-(geranylgeranyl)-sn-glycerol 1-phosphate + 8 AH2. It carries out the reaction CDP-2,3-bis-O-(geranylgeranyl)-sn-glycerol + 8 AH2 = CDP-2,3-bis-O-(phytanyl)-sn-glycerol + 8 A. The enzyme catalyses archaetidylserine + 8 AH2 = 2,3-bis-O-phytanyl-sn-glycero-3-phospho-L-serine + 8 A. Its pathway is membrane lipid metabolism; glycerophospholipid metabolism. In terms of biological role, is involved in the reduction of 2,3-digeranylgeranylglycerophospholipids (unsaturated archaeols) into 2,3-diphytanylglycerophospholipids (saturated archaeols) in the biosynthesis of archaeal membrane lipids. Catalyzes the formation of archaetidic acid (2,3-di-O-phytanyl-sn-glyceryl phosphate) from 2,3-di-O-geranylgeranylglyceryl phosphate (DGGGP) via the hydrogenation of each double bond of the isoprenoid chains. Is also probably able to reduce double bonds of geranyl groups in CDP-2,3-bis-O-(geranylgeranyl)-sn-glycerol and archaetidylserine, thus acting at various stages in the biosynthesis of archaeal membrane lipids. This chain is Digeranylgeranylglycerophospholipid reductase 2, found in Methanosphaera stadtmanae (strain ATCC 43021 / DSM 3091 / JCM 11832 / MCB-3).